Consider the following 478-residue polypeptide: Light-independent protochlorophyllide reductase subunit N (478 aa).

[4Fe-4S] cluster contacts are provided by Cys-22, Cys-47, and Cys-107.

Belongs to the BchN/ChlN family. In terms of assembly, protochlorophyllide reductase is composed of three subunits; ChlL, ChlN and ChlB. Forms a heterotetramer of two ChlB and two ChlN subunits. [4Fe-4S] cluster is required as a cofactor.

The protein resides in the plastid. It is found in the chloroplast. The catalysed reaction is chlorophyllide a + oxidized 2[4Fe-4S]-[ferredoxin] + 2 ADP + 2 phosphate = protochlorophyllide a + reduced 2[4Fe-4S]-[ferredoxin] + 2 ATP + 2 H2O. Its pathway is porphyrin-containing compound metabolism; chlorophyll biosynthesis (light-independent). Its function is as follows. Component of the dark-operative protochlorophyllide reductase (DPOR) that uses Mg-ATP and reduced ferredoxin to reduce ring D of protochlorophyllide (Pchlide) to form chlorophyllide a (Chlide). This reaction is light-independent. The NB-protein (ChlN-ChlB) is the catalytic component of the complex. This chain is Light-independent protochlorophyllide reductase subunit N, found in Chlorokybus atmophyticus (Soil alga).